Reading from the N-terminus, the 94-residue chain is MGSELETAMETLINVFHAHSGKEGDKYKLSKKELKELLQTELSGFLDAQKDADAVDKVMKELDENGDGEVDFQEYVVLVAALTVACNNFFWENS.

Position 2 is a blocked amino end (Gly) (Gly-2). EF-hand domains follow at residues 13 to 48 (INVFHAHSGKEGDKYKLSKKELKELLQTELSGFLDA) and 50 to 85 (KDADAVDKVMKELDENGDGEVDFQEYVVLVAALTVA). Ca(2+) contacts are provided by Lys-28, Glu-33, Asp-63, Asn-65, Asp-67, Glu-69, and Glu-74. Cys-86 carries the post-translational modification S-nitrosocysteine.

It belongs to the S-100 family. In terms of assembly, dimer of either two alpha chains, or two beta chains, or one alpha and one beta chain. Also forms heterodimers with S100P. Interacts with AGER. Interacts with CAPZA1. Interacts with FKBP4. Interacts with RYR1 and RYR2. Interacts with CACYBP in a calcium-dependent manner. Interacts with PPP5C (via TPR repeats); the interaction is calcium-dependent and modulates PPP5C activity. Interacts with ATP2A2 and PLN in a Ca(2+)-dependent manner. Interacts with mitochondrial F1-ATPase subunits ATP5F1A and ATP5F1B; these interactions increase F1-ATPase activity. Glutathionylated; glutathionylation increases affinity to calcium about 10-fold. As to expression, although predominant among the water-soluble brain proteins, S100 is also found in a variety of other tissues.

Its subcellular location is the cytoplasm. The protein resides in the sarcoplasmic reticulum. The protein localises to the mitochondrion. Its function is as follows. Small calcium binding protein that plays important roles in several biological processes such as Ca(2+) homeostasis, chondrocyte biology and cardiomyocyte regulation. In response to an increase in intracellular Ca(2+) levels, binds calcium which triggers conformational changes. These changes allow interactions with specific target proteins and modulate their activity. Regulates a network in cardiomyocytes controlling sarcoplasmic reticulum Ca(2+) cycling and mitochondrial function through interaction with the ryanodine receptors RYR1 and RYR2, sarcoplasmic reticulum Ca(2+)-ATPase/ATP2A2 and mitochondrial F1-ATPase. Facilitates diastolic Ca(2+) dissociation and myofilament mechanics in order to improve relaxation during diastole. This is Protein S100-A1 (S100A1) from Bos taurus (Bovine).